Reading from the N-terminus, the 543-residue chain is Lipoyl synthase, apicoplast (543 aa).

Residues 1-63 (MAYFFDFPTD…LFSLLSASQS (63 aa)) form the signal peptide. [4Fe-4S] cluster is bound by residues Cys252, Cys257, Cys263, Cys278, Cys282, Cys285, and Ser493. Residues 264 to 482 (WNGGTATLIL…QDIAEEMGFK (219 aa)) enclose the Radical SAM core domain.

Belongs to the radical SAM superfamily. Lipoyl synthase family. Requires [4Fe-4S] cluster as cofactor.

Its subcellular location is the plastid. It is found in the apicoplast. It catalyses the reaction [[Fe-S] cluster scaffold protein carrying a second [4Fe-4S](2+) cluster] + N(6)-octanoyl-L-lysyl-[protein] + 2 oxidized [2Fe-2S]-[ferredoxin] + 2 S-adenosyl-L-methionine + 4 H(+) = [[Fe-S] cluster scaffold protein] + N(6)-[(R)-dihydrolipoyl]-L-lysyl-[protein] + 4 Fe(3+) + 2 hydrogen sulfide + 2 5'-deoxyadenosine + 2 L-methionine + 2 reduced [2Fe-2S]-[ferredoxin]. Its pathway is protein modification; protein lipoylation via endogenous pathway; protein N(6)-(lipoyl)lysine from octanoyl-[acyl-carrier-protein]: step 2/2. Its function is as follows. Catalyzes the radical-mediated insertion of two sulfur atoms into the C-6 and C-8 positions of the octanoyl moiety bound to the lipoyl domains of lipoate-dependent enzymes, thereby converting the octanoylated domains into lipoylated derivatives. This Toxoplasma gondii protein is Lipoyl synthase, apicoplast.